The following is a 93-amino-acid chain: UPF0358 protein OB1428 (93 aa).

It belongs to the UPF0358 family.

The sequence is that of UPF0358 protein OB1428 from Oceanobacillus iheyensis (strain DSM 14371 / CIP 107618 / JCM 11309 / KCTC 3954 / HTE831).